The primary structure comprises 87 residues: Putative regulatory protein syc0519_c (87 aa).

This sequence belongs to the RemA family.

This Synechococcus sp. (strain ATCC 27144 / PCC 6301 / SAUG 1402/1) (Anacystis nidulans) protein is Putative regulatory protein syc0519_c.